Reading from the N-terminus, the 676-residue chain is Methionine--tRNA ligase (676 aa).

The short motif at 15–25 is the 'HIGH' region element; it reads PYANGPIHLGH. Zn(2+) is bound by residues Cys-146, Cys-149, Cys-159, and Cys-162. The 'KMSKS' region motif lies at 332–336; that stretch reads KMSKS. Lys-335 serves as a coordination point for ATP. Residues 575-676 form the tRNA-binding domain; that stretch reads DFAKIDLRIA…EGAQPGMRVK (102 aa).

This sequence belongs to the class-I aminoacyl-tRNA synthetase family. MetG type 1 subfamily. Homodimer. Requires Zn(2+) as cofactor.

It localises to the cytoplasm. It catalyses the reaction tRNA(Met) + L-methionine + ATP = L-methionyl-tRNA(Met) + AMP + diphosphate. Its function is as follows. Is required not only for elongation of protein synthesis but also for the initiation of all mRNA translation through initiator tRNA(fMet) aminoacylation. This chain is Methionine--tRNA ligase, found in Shewanella sp. (strain MR-4).